The sequence spans 224 residues: Deoxyribose-phosphate aldolase (224 aa).

Aspartate 92 functions as the Proton donor/acceptor in the catalytic mechanism. Lysine 155 serves as the catalytic Schiff-base intermediate with acetaldehyde. Residue lysine 184 is the Proton donor/acceptor of the active site.

It belongs to the DeoC/FbaB aldolase family. DeoC type 1 subfamily.

The protein resides in the cytoplasm. It carries out the reaction 2-deoxy-D-ribose 5-phosphate = D-glyceraldehyde 3-phosphate + acetaldehyde. Its pathway is carbohydrate degradation; 2-deoxy-D-ribose 1-phosphate degradation; D-glyceraldehyde 3-phosphate and acetaldehyde from 2-deoxy-alpha-D-ribose 1-phosphate: step 2/2. Catalyzes a reversible aldol reaction between acetaldehyde and D-glyceraldehyde 3-phosphate to generate 2-deoxy-D-ribose 5-phosphate. The polypeptide is Deoxyribose-phosphate aldolase (Halalkalibacterium halodurans (strain ATCC BAA-125 / DSM 18197 / FERM 7344 / JCM 9153 / C-125) (Bacillus halodurans)).